The following is a 604-amino-acid chain: Aspartate--tRNA(Asp/Asn) ligase (604 aa).

Residue glutamate 175 coordinates L-aspartate. The segment at 199–202 is aspartate; the sequence is QQFK. Residues arginine 221 and histidine 456 each contribute to the L-aspartate site. 221–223 lines the ATP pocket; that stretch reads RDE. Glutamate 496 provides a ligand contact to ATP. Arginine 503 is a binding site for L-aspartate. Position 548–551 (548–551) interacts with ATP; that stretch reads GVDR.

This sequence belongs to the class-II aminoacyl-tRNA synthetase family. Type 1 subfamily. Homodimer.

It localises to the cytoplasm. The catalysed reaction is tRNA(Asx) + L-aspartate + ATP = L-aspartyl-tRNA(Asx) + AMP + diphosphate. Aspartyl-tRNA synthetase with relaxed tRNA specificity since it is able to aspartylate not only its cognate tRNA(Asp) but also tRNA(Asn). Reaction proceeds in two steps: L-aspartate is first activated by ATP to form Asp-AMP and then transferred to the acceptor end of tRNA(Asp/Asn). This chain is Aspartate--tRNA(Asp/Asn) ligase, found in Methylorubrum extorquens (strain CM4 / NCIMB 13688) (Methylobacterium extorquens).